Here is a 90-residue protein sequence, read N- to C-terminus: Probable Fe(2+)-trafficking protein (90 aa).

Belongs to the Fe(2+)-trafficking protein family.

In terms of biological role, could be a mediator in iron transactions between iron acquisition and iron-requiring processes, such as synthesis and/or repair of Fe-S clusters in biosynthetic enzymes. The chain is Probable Fe(2+)-trafficking protein from Methylococcus capsulatus (strain ATCC 33009 / NCIMB 11132 / Bath).